A 518-amino-acid polypeptide reads, in one-letter code: T-box transcription factor TBX5 (518 aa).

The disordered stretch occupies residues 1 to 46 (MADADEGFGLAHTPLEPDAKDLPCDSKPESALGAPSKSPSSPQAAF). Residues 15 to 28 (LEPDAKDLPCDSKP) are compositionally biased toward basic and acidic residues. The segment covering 34 to 45 (APSKSPSSPQAA) has biased composition (low complexity). The T-box DNA-binding region spans 58 to 238 (LHERELWLKF…NNPFAKGFRG (181 aa)). Positions 250-356 (MQSKEYPVVP…PSEEDSFYRS (107 aa)) are disordered. The span at 262–301 (TVRQKVASNHSPFSSESRALSTSSNLGSQYQCENGVSGPS) shows a compositional bias: polar residues. Lys339 is subject to N6-acetyllysine.

In terms of assembly, monomer. Homodimer (via the T-box); binds DNA as homodimer. Interacts (via the T-box) with NKX2-5 (via the homeobox); this complex binds DNA. Interacts with GATA4. Interacts with KAT2A and KAT2B. Acetylation at Lys-339 by KAT2A and KAT2B promotes nuclear retention.

It is found in the nucleus. The protein resides in the cytoplasm. DNA-binding protein that regulates the transcription of several genes and is involved in heart development and limb pattern formation. Binds to the core DNA motif of NPPA promoter. This is T-box transcription factor TBX5 (TBX5) from Homo sapiens (Human).